The following is a 317-amino-acid chain: Cytochrome c biogenesis protein CcsA (317 aa).

8 helical membrane passes run 17–37 (VVSI…IVGL), 44–64 (GMIV…IYSG), 71–91 (LYES…LPYL), 101–121 (ITSP…LTQI), 143–163 (MILS…LLVI), 223–243 (IISI…VWAN), 252–272 (WDPK…YLHI), and 284–304 (AIVA…INIL).

It belongs to the CcmF/CycK/Ccl1/NrfE/CcsA family. As to quaternary structure, may interact with Ccs1.

The protein localises to the plastid. It is found in the chloroplast thylakoid membrane. Functionally, required during biogenesis of c-type cytochromes (cytochrome c6 and cytochrome f) at the step of heme attachment. This chain is Cytochrome c biogenesis protein CcsA, found in Pelargonium hortorum (Common geranium).